Here is a 201-residue protein sequence, read N- to C-terminus: Recombination protein RecR (201 aa).

The C4-type zinc finger occupies Cys-59–Cys-74. A Toprim domain is found at Ser-82 to Pro-177.

It belongs to the RecR family.

In terms of biological role, may play a role in DNA repair. It seems to be involved in an RecBC-independent recombinational process of DNA repair. It may act with RecF and RecO. The polypeptide is Recombination protein RecR (Rickettsia felis (strain ATCC VR-1525 / URRWXCal2) (Rickettsia azadi)).